The primary structure comprises 433 residues: Coiled-coil domain-containing protein 71 (433 aa).

Residue serine 125 is modified to Phosphoserine. 3 disordered regions span residues 204-256, 284-310, and 325-396; these read LKVR…GCSA, QTKT…KAAV, and KAAQ…RKSQ. Composition is skewed to basic residues over residues 216-230 and 288-306; these read KAPR…KHLT and VRVR…RAKA. The stretch at 260–330 forms a coiled coil; that stretch reads KTVQAQASQT…QAKAKAAQTK (71 aa).

The protein is Coiled-coil domain-containing protein 71 (Ccdc71) of Mus musculus (Mouse).